Here is a 116-residue protein sequence, read N- to C-terminus: Large ribosomal subunit protein bL21c (116 aa).

It belongs to the bacterial ribosomal protein bL21 family. Part of the 50S ribosomal subunit.

It is found in the plastid. It localises to the chloroplast. This protein binds to 23S rRNA. The chain is Large ribosomal subunit protein bL21c from Marchantia polymorpha (Common liverwort).